Consider the following 86-residue polypeptide: Protein Tat (86 aa).

The interaction with human CREBBP stretch occupies residues 1-24 (MDPVDPNQEPWNHPGSQPRTACNN). Residues 1 to 48 (MDPVDPNQEPWNHPGSQPRTACNNCYCKKCCYHCQLCFLKKGLGIYYG) form a transactivation region. Zn(2+)-binding residues include C22, C25, and C27. Residues 22–37 (CNNCYCKKCCYHCQLC) are cysteine-rich. K28 carries the post-translational modification N6-acetyllysine; by host PCAF. 4 residues coordinate Zn(2+): C30, H33, C34, and C37. The tract at residues 38 to 48 (FLKKGLGIYYG) is core. A compositionally biased stretch (basic residues) spans 48–58 (GRKKRRQRRGT). Residues 48–86 (GRKKRRQRRGTPKSLQDHQTLIPKQPLSRTSGDPTGPEK) are disordered. Positions 49–57 (RKKRRQRRG) match the Nuclear localization signal, RNA-binding (TAR), and protein transduction motif. An interaction with the host capping enzyme RNGTT region spans residues 49 to 86 (RKKRRQRRGTPKSLQDHQTLIPKQPLSRTSGDPTGPEK). 2 positions are modified to N6-acetyllysine; by host EP300 and GCN5L2: K50 and K51. R52 and R53 each carry asymmetric dimethylarginine; by host PRMT6. K71 is covalently cross-linked (Glycyl lysine isopeptide (Lys-Gly) (interchain with G-Cter in ubiquitin)).

Belongs to the lentiviruses Tat family. In terms of assembly, interacts with host CCNT1. Associates with the P-TEFb complex composed at least of Tat, P-TEFb (CDK9 and CCNT1), TAR RNA, RNA Pol II. Recruits the HATs CREBBP, TAF1/TFIID, EP300, PCAF and GCN5L2. Interacts with host KAT5/Tip60; this interaction targets the latter to degradation. Interacts with the host deacetylase SIRT1. Interacts with host capping enzyme RNGTT; this interaction stimulates RNGTT. Binds to host KDR, and to the host integrins ITGAV/ITGB3 and ITGA5/ITGB1. Interacts with host KPNB1/importin beta-1 without previous binding to KPNA1/importin alpha-1. Interacts with EIF2AK2. Interacts with host nucleosome assembly protein NAP1L1; this interaction may be required for the transport of Tat within the nucleus, since the two proteins interact at the nuclear rim. Interacts with host C1QBP/SF2P32; this interaction involves lysine-acetylated Tat. Interacts with the host chemokine receptors CCR2, CCR3 and CXCR4. Interacts with host DPP4/CD26; this interaction may trigger an anti-proliferative effect. Interacts with host LDLR. Interacts with the host extracellular matrix metalloproteinase MMP1. Interacts with host PRMT6; this interaction mediates Tat's methylation. Interacts with, and is ubiquitinated by MDM2/Hdm2. Interacts with host PSMC3 and HTATIP2. Interacts with STAB1; this interaction may overcome SATB1-mediated repression of IL2 and IL2RA (interleukin) in T cells by binding to the same domain than HDAC1. Interacts (when acetylated) with human CDK13, thereby increasing HIV-1 mRNA splicing and promoting the production of the doubly spliced HIV-1 protein Nef. Interacts with host TBP; this interaction modulates the activity of transcriptional pre-initiation complex. Interacts with host RELA. Interacts with host PLSCR1; this interaction negatively regulates Tat transactivation activity by altering its subcellular distribution. Asymmetrical arginine methylation by host PRMT6 seems to diminish the transactivation capacity of Tat and affects the interaction with host CCNT1. Post-translationally, acetylation by EP300, CREBBP, GCN5L2/GCN5 and PCAF regulates the transactivation activity of Tat. EP300-mediated acetylation of Lys-50 promotes dissociation of Tat from the TAR RNA through the competitive binding to PCAF's bromodomain. In addition, the non-acetylated Tat's N-terminus can also interact with PCAF. PCAF-mediated acetylation of Lys-28 enhances Tat's binding to CCNT1. Lys-50 is deacetylated by SIRT1. In terms of processing, polyubiquitination by host MDM2 does not target Tat to degradation, but activates its transactivation function and fosters interaction with CCNT1 and TAR RNA. Phosphorylated by EIF2AK2 on serine and threonine residues adjacent to the basic region important for TAR RNA binding and function. Phosphorylation of Tat by EIF2AK2 is dependent on the prior activation of EIF2AK2 by dsRNA.

It localises to the host nucleus. The protein localises to the host nucleolus. Its subcellular location is the host cytoplasm. The protein resides in the secreted. Functionally, transcriptional activator that increases RNA Pol II processivity, thereby increasing the level of full-length viral transcripts. Recognizes a hairpin structure at the 5'-LTR of the nascent viral mRNAs referred to as the transactivation responsive RNA element (TAR) and recruits the cyclin T1-CDK9 complex (P-TEFb complex) that will in turn hyperphosphorylate the RNA polymerase II to allow efficient elongation. The CDK9 component of P-TEFb and other Tat-activated kinases hyperphosphorylate the C-terminus of RNA Pol II that becomes stabilized and much more processive. Other factors such as HTATSF1/Tat-SF1, SUPT5H/SPT5, and HTATIP2 are also important for Tat's function. Besides its effect on RNA Pol II processivity, Tat induces chromatin remodeling of proviral genes by recruiting the histone acetyltransferases (HATs) CREBBP, EP300 and PCAF to the chromatin. This also contributes to the increase in proviral transcription rate, especially when the provirus integrates in transcriptionally silent region of the host genome. To ensure maximal activation of the LTR, Tat mediates nuclear translocation of NF-kappa-B by interacting with host RELA. Through its interaction with host TBP, Tat may also modulate transcription initiation. Tat can reactivate a latently infected cell by penetrating in it and transactivating its LTR promoter. In the cytoplasm, Tat is thought to act as a translational activator of HIV-1 mRNAs. In terms of biological role, extracellular circulating Tat can be endocytosed by surrounding uninfected cells via the binding to several surface receptors such as CD26, CXCR4, heparan sulfate proteoglycans (HSPG) or LDLR. Neurons are rarely infected, but they internalize Tat via their LDLR. Through its interaction with nuclear HATs, Tat is potentially able to control the acetylation-dependent cellular gene expression. Modulates the expression of many cellular genes involved in cell survival, proliferation or in coding for cytokines or cytokine receptors. Tat plays a role in T-cell and neurons apoptosis. Tat induced neurotoxicity and apoptosis probably contribute to neuroAIDS. Circulating Tat also acts as a chemokine-like and/or growth factor-like molecule that binds to specific receptors on the surface of the cells, affecting many cellular pathways. In the vascular system, Tat binds to ITGAV/ITGB3 and ITGA5/ITGB1 integrins dimers at the surface of endothelial cells and competes with bFGF for heparin-binding sites, leading to an excess of soluble bFGF. The protein is Protein Tat of Human immunodeficiency virus type 1 group M subtype H (isolate VI991) (HIV-1).